The following is a 602-amino-acid chain: Elongation factor 4 (602 aa).

One can recognise a tr-type G domain in the interval 7–188 (ENIRNFSIIA…SIIRLVPPPK (182 aa)). GTP contacts are provided by residues 19-24 (DHGKST) and 135-138 (NKID).

Belongs to the TRAFAC class translation factor GTPase superfamily. Classic translation factor GTPase family. LepA subfamily.

It is found in the cell inner membrane. The catalysed reaction is GTP + H2O = GDP + phosphate + H(+). In terms of biological role, required for accurate and efficient protein synthesis under certain stress conditions. May act as a fidelity factor of the translation reaction, by catalyzing a one-codon backward translocation of tRNAs on improperly translocated ribosomes. Back-translocation proceeds from a post-translocation (POST) complex to a pre-translocation (PRE) complex, thus giving elongation factor G a second chance to translocate the tRNAs correctly. Binds to ribosomes in a GTP-dependent manner. The polypeptide is Elongation factor 4 (Chlamydia trachomatis serovar L2 (strain ATCC VR-902B / DSM 19102 / 434/Bu)).